The following is a 946-amino-acid chain: Inter-alpha-trypsin inhibitor heavy chain H2 (946 aa).

Positions 1-18 are cleaved as a signal peptide; the sequence is MQRLACVLIWLFLLEEQA. Residues 19-54 constitute a propeptide that is removed on maturation; sequence FEIPANEYSEFAGYSNLVELAPDKFPFVQENRRYQR. Residues 56 to 185 enclose the VIT domain; the sequence is LPEESGEMTD…KVQFELHYQE (130 aa). At S60 the chain carries Phosphoserine. N118 and N263 each carry an N-linked (GlcNAc...) asparagine glycan. A 4-carboxyglutamate mark is found at E282 and E283. The region spanning 308–468 is the VWFA domain; it reads PKNILFVIDV…YDFLKRLSNE (161 aa). The N-linked (GlcNAc...) asparagine glycan is linked to N445. S466 is subject to Phosphoserine. N578 is a glycosylation site (N-linked (GlcNAc...) asparagine). D702 bears the Aspartate 1-(chondroitin 4-sulfate)-ester mark. The propeptide occupies 703 to 946; sequence PHFIIYLPKS…PQLYSFLKRP (244 aa). S886 carries the phosphoserine modification.

It belongs to the ITIH family. In terms of assembly, I-alpha-I plasma protease inhibitors are assembled from one or two heavy chains (HC) and one light chain, bikunin. Inter-alpha-inhibitor (I-alpha-I) is composed of ITIH1/HC1, ITIH2/HC2 and bikunin. Post-translationally, heavy chains are linked to bikunin via chondroitin 4-sulfate esterified to the alpha-carboxyl of the C-terminal aspartate after propeptide cleavage. Phosphorylated by FAM20C in the extracellular medium.

The protein resides in the secreted. In terms of biological role, may act as a carrier of hyaluronan in serum or as a binding protein between hyaluronan and other matrix protein, including those on cell surfaces in tissues to regulate the localization, synthesis and degradation of hyaluronan which are essential to cells undergoing biological processes. The sequence is that of Inter-alpha-trypsin inhibitor heavy chain H2 (ITIH2) from Mesocricetus auratus (Golden hamster).